The following is a 365-amino-acid chain: Serpentine receptor class epsilon-21 (365 aa).

7 helical membrane-spanning segments follow: residues 49-69 (ILIN…VFCI), 82-102 (IIIS…FVFI), 116-136 (LLFW…HTLL), 158-178 (VWIA…YAFL), 189-209 (IFIV…IIYF), 250-270 (VVVV…PIIL), and 292-314 (PLVV…LSYY).

The protein belongs to the nematode receptor-like protein sre family.

The protein resides in the membrane. The sequence is that of Serpentine receptor class epsilon-21 (sre-21) from Caenorhabditis elegans.